The sequence spans 489 residues: Cysteine--tRNA ligase (489 aa).

C29 is a Zn(2+) binding site. The short motif at 31 to 41 (VTVYDYCHLGH) is the 'HIGH' region element. Positions 215, 240, and 244 each coordinate Zn(2+). The 'KMSKS' region signature appears at 272 to 276 (KMSKS). K275 provides a ligand contact to ATP.

Belongs to the class-I aminoacyl-tRNA synthetase family. Monomer. It depends on Zn(2+) as a cofactor.

The protein localises to the cytoplasm. The catalysed reaction is tRNA(Cys) + L-cysteine + ATP = L-cysteinyl-tRNA(Cys) + AMP + diphosphate. This Trichodesmium erythraeum (strain IMS101) protein is Cysteine--tRNA ligase.